The following is a 135-amino-acid chain: VHWTAEEKALVNVVWSKTDHQAVVANALGRLFVVYPWTKTYFTKFNGKAGDSAVQTHAGKVVSALTLAYNHIDDVKPHFKHYEGFHVDPENFRLLANCLNVELGHTLHKEFTPELHAAWNKFSNVVVDALSKGYH.

Residues His-2–His-135 form the Globin domain. Residues His-57 and His-81 each coordinate heme b.

It belongs to the globin family. In terms of assembly, hb 2 is a heterotetramer of two alpha and two beta-2 chains. As to expression, red blood cells (at protein level).

Its function is as follows. Involved in oxygen transport from gills to the various peripheral tissues. The chain is Hemoglobin subunit beta-2 from Somniosus microcephalus (Greenland sleeper shark).